Here is a 292-residue protein sequence, read N- to C-terminus: Protein sarah (292 aa).

Residues 1–51 (MSDAAKSNNNASADAPDPTTPDATGEADAANAATPTTPRGNHNNNNSANGR) are compositionally biased toward low complexity. The tract at residues 1–111 (MSDAAKSNNN…TEPEVDADSF (111 aa)) is disordered. A phosphoserine mark is found at Ser67, Ser72, and Ser100. The segment covering 98-111 (VDSDTEPEVDADSF) has biased composition (acidic residues). Phosphothreonine is present on residues Thr102 and Thr196. Phosphoserine occurs at positions 215 and 219. Thr246 bears the Phosphothreonine mark.

Belongs to the RCAN family. As to quaternary structure, interacts with Pp2B-14D, CanA-14F and CanB2. In terms of processing, phosphorylation at Ser-215 and Ser-219 is essential for calcineurin activation and completion of female meiosis. Sgg is required for phosphorylation of Ser-215 in activated eggs. Ser-100, Thr-102 and Ser-219 are highly phosphorylated in both ovaries and activated eggs; however, phosphorylation at Ser-100 or Thr-102 is not required for sra function in completion of female meiosis. Expressed in central nervous system of the third instar larvae, with a relatively intense signal in the brain and weak signals in the ventral ganglion. Relatively low, but ubiquitous expression level is observed in leg and wing imaginal disks, no signal is detected in the eye-antennal disks. Expressed in all neurons in the adult brain.

Functionally, required for elongation of meiosis I spindle. Critical for ovulation, meiotic progression in oocytes and female courtship behavior, including their postmating changes. Regulates female meiosis by controlling calcineurin activity in the germline. Has a role in calcium signaling during egg activation; bcd mRNA polyadenylation and translation in the oocyte. This chain is Protein sarah (sra), found in Drosophila melanogaster (Fruit fly).